The following is an 85-amino-acid chain: RNA-binding protein Hfq (85 aa).

In terms of domain architecture, Sm spans 9–68 (DPFLNALRRERIPVSIYLVNGIKLQGQIESFDQFVILLKNTVNQMVYKHAISTVVPARPV). The tract at residues 66 to 85 (RPVNHHHASDRPATLEKTEE) is disordered. Basic and acidic residues predominate over residues 72–85 (HASDRPATLEKTEE).

It belongs to the Hfq family. Homohexamer.

In terms of biological role, RNA chaperone that binds small regulatory RNA (sRNAs) and mRNAs to facilitate mRNA translational regulation in response to envelope stress, environmental stress and changes in metabolite concentrations. Also binds with high specificity to tRNAs. The sequence is that of RNA-binding protein Hfq from Photobacterium profundum (strain SS9).